A 150-amino-acid chain; its full sequence is Ribosomal RNA large subunit methyltransferase H (150 aa).

S-adenosyl-L-methionine is bound by residues Ala100 and 118-123 (LSEMTF).

The protein belongs to the RNA methyltransferase RlmH family. Homodimer.

Its subcellular location is the cytoplasm. It carries out the reaction pseudouridine(1915) in 23S rRNA + S-adenosyl-L-methionine = N(3)-methylpseudouridine(1915) in 23S rRNA + S-adenosyl-L-homocysteine + H(+). In terms of biological role, specifically methylates the pseudouridine at position 1915 (m3Psi1915) in 23S rRNA. The sequence is that of Ribosomal RNA large subunit methyltransferase H from Helicobacter pylori (strain J99 / ATCC 700824) (Campylobacter pylori J99).